We begin with the raw amino-acid sequence, 180 residues long: Large ribosomal subunit protein uL5c (180 aa).

This sequence belongs to the universal ribosomal protein uL5 family. As to quaternary structure, part of the 50S ribosomal subunit; contacts the 5S rRNA.

It is found in the plastid. The protein localises to the chloroplast. Functionally, binds 5S rRNA, forms part of the central protuberance of the 50S subunit. The chain is Large ribosomal subunit protein uL5c (rpl5) from Tupiella akineta (Green alga).